The sequence spans 105 residues: Meiotically up-regulated gene 52 protein (105 aa).

Its function is as follows. Has a role in meiosis. The sequence is that of Meiotically up-regulated gene 52 protein (mug52) from Schizosaccharomyces pombe (strain 972 / ATCC 24843) (Fission yeast).